The chain runs to 342 residues: tRNA N6-adenosine threonylcarbamoyltransferase (342 aa).

Residues His-120 and His-124 each contribute to the Fe cation site. Substrate contacts are provided by residues 142 to 146, Asp-175, Gly-188, Asp-192, and Asn-281; that span reads VVSGG. Position 310 (Asp-310) interacts with Fe cation.

The protein belongs to the KAE1 / TsaD family. Fe(2+) is required as a cofactor.

The protein localises to the cytoplasm. It catalyses the reaction L-threonylcarbamoyladenylate + adenosine(37) in tRNA = N(6)-L-threonylcarbamoyladenosine(37) in tRNA + AMP + H(+). Required for the formation of a threonylcarbamoyl group on adenosine at position 37 (t(6)A37) in tRNAs that read codons beginning with adenine. Is involved in the transfer of the threonylcarbamoyl moiety of threonylcarbamoyl-AMP (TC-AMP) to the N6 group of A37, together with TsaE and TsaB. TsaD likely plays a direct catalytic role in this reaction. This Geobacillus kaustophilus (strain HTA426) protein is tRNA N6-adenosine threonylcarbamoyltransferase.